The sequence spans 895 residues: Collagen alpha-1(I) chain (895 aa).

The interval 1 to 895 (GPMGPSGPRG…PGPIGPPGPR (895 aa)) is disordered. Over residues 20–39 (PQGFQGPPGEPGEPGASGPM) the composition is skewed to low complexity. The span at 51–65 (NGDDGEAGKPGRPGE) shows a compositional bias: basic and acidic residues. Serine 90 carries the post-translational modification Phosphoserine. Low complexity-rich tracts occupy residues 98-114 (DAGPAGPKGEPGSPGEN) and 137-150 (PAGARGNDGATGAA). A compositionally biased stretch (pro residues) spans 152–164 (PPGPTGPAGPPGF). Low complexity-rich tracts occupy residues 198–237 (AGAAGPAGNPGADGQPGAKGANGAPGIAGAPGFPGARGPS), 302–336 (ERGFPGADGVAGPKGPAGERGAPGPAGPKGSPGEA), 348–374 (KGITGSPGSPGPDGKTGPPGPAGQDGR), 383–399 (ARGQAGVMGFPGPKGAA), 553–564 (TGPSGPAGPTGA), and 575–593 (AGFAGPPGADGQPGAKGDA). Phosphoserine is present on serine 556. The span at 595-607 (PPGPAGPAGPPGP) shows a compositional bias: pro residues. Low complexity-rich tracts occupy residues 608–635 (IGSVGAPGPKGSAGPPGATGFPGAAGRV), 660–669 (ETGPAGRPGE), and 679–703 (AGEKGSPGADGPAGAPGTPGPQGIA). Residues 741–751 (PPGPVGPPGIA) show a composition bias toward pro residues. A compositionally biased stretch (low complexity) spans 753 to 768 (PPGESGREGSPGAEGS). Pro residues predominate over residues 787–802 (AGPPGAPGAPGAPGPV). 2 stretches are compositionally biased toward low complexity: residues 823-838 (IGPVGARGPAGPQGPR) and 853-886 (PGEQGPSGASGPAGPRGPPGSAGAPGKDGINGIP).

Belongs to the fibrillar collagen family. Trimers of one alpha 2(I) and two alpha 1(I) chains. Prolines at the third position of the tripeptide repeating unit (G-X-Y) are hydroxylated in some or all of the chains. As to expression, forms the fibrils of tendon, ligaments and bones. In bones, the fibrils are mineralized with calcium hydroxyapatite.

It is found in the secreted. It localises to the extracellular space. Its subcellular location is the extracellular matrix. Functionally, type I collagen is a member of group I collagen (fibrillar forming collagen). The chain is Collagen alpha-1(I) chain from Equus sp.